Here is a 231-residue protein sequence, read N- to C-terminus: Octanoyltransferase (231 aa).

The BPL/LPL catalytic domain maps to 29–231 (PQDPDLLWLC…GRQLCIWLAP (203 aa)). Substrate contacts are provided by residues 68–75 (RGGQVTFH), 164–166 (ALG), and 177–179 (GVA). The active-site Acyl-thioester intermediate is cysteine 195.

This sequence belongs to the LipB family.

It is found in the cytoplasm. It carries out the reaction octanoyl-[ACP] + L-lysyl-[protein] = N(6)-octanoyl-L-lysyl-[protein] + holo-[ACP] + H(+). The protein operates within protein modification; protein lipoylation via endogenous pathway; protein N(6)-(lipoyl)lysine from octanoyl-[acyl-carrier-protein]: step 1/2. In terms of biological role, catalyzes the transfer of endogenously produced octanoic acid from octanoyl-acyl-carrier-protein onto the lipoyl domains of lipoate-dependent enzymes. Lipoyl-ACP can also act as a substrate although octanoyl-ACP is likely to be the physiological substrate. This chain is Octanoyltransferase, found in Verminephrobacter eiseniae (strain EF01-2).